A 379-amino-acid chain; its full sequence is Protein-glutamate methylesterase/protein-glutamine glutaminase (379 aa).

Residues 4 to 121 (KVLVVDDSSF…AKNSDEAGSL (118 aa)) form the Response regulatory domain. Asp55 bears the 4-aspartylphosphate mark. The CheB-type methylesterase domain maps to 185 to 379 (SGKEYKLLAI…ASMVKEISRG (195 aa)). Residues Ser197, His224, and Asp321 contribute to the active site.

Belongs to the CheB family. Phosphorylated by CheA. Phosphorylation of the N-terminal regulatory domain activates the methylesterase activity.

It is found in the cytoplasm. The enzyme catalyses [protein]-L-glutamate 5-O-methyl ester + H2O = L-glutamyl-[protein] + methanol + H(+). It carries out the reaction L-glutaminyl-[protein] + H2O = L-glutamyl-[protein] + NH4(+). Its function is as follows. Involved in chemotaxis. Part of a chemotaxis signal transduction system that modulates chemotaxis in response to various stimuli. Catalyzes the demethylation of specific methylglutamate residues introduced into the chemoreceptors (methyl-accepting chemotaxis proteins or MCP) by CheR. Also mediates the irreversible deamidation of specific glutamine residues to glutamic acid. This is Protein-glutamate methylesterase/protein-glutamine glutaminase from Colwellia psychrerythraea (strain 34H / ATCC BAA-681) (Vibrio psychroerythus).